We begin with the raw amino-acid sequence, 180 residues long: Crossover junction endodeoxyribonuclease RuvC (180 aa).

Residues Asp7, Glu66, and Asp138 contribute to the active site. 3 residues coordinate Mg(2+): Asp7, Glu66, and Asp138.

This sequence belongs to the RuvC family. In terms of assembly, homodimer which binds Holliday junction (HJ) DNA. The HJ becomes 2-fold symmetrical on binding to RuvC with unstacked arms; it has a different conformation from HJ DNA in complex with RuvA. In the full resolvosome a probable DNA-RuvA(4)-RuvB(12)-RuvC(2) complex forms which resolves the HJ. It depends on Mg(2+) as a cofactor.

Its subcellular location is the cytoplasm. It catalyses the reaction Endonucleolytic cleavage at a junction such as a reciprocal single-stranded crossover between two homologous DNA duplexes (Holliday junction).. Functionally, the RuvA-RuvB-RuvC complex processes Holliday junction (HJ) DNA during genetic recombination and DNA repair. Endonuclease that resolves HJ intermediates. Cleaves cruciform DNA by making single-stranded nicks across the HJ at symmetrical positions within the homologous arms, yielding a 5'-phosphate and a 3'-hydroxyl group; requires a central core of homology in the junction. The consensus cleavage sequence is 5'-(A/T)TT(C/G)-3'. Cleavage occurs on the 3'-side of the TT dinucleotide at the point of strand exchange. HJ branch migration catalyzed by RuvA-RuvB allows RuvC to scan DNA until it finds its consensus sequence, where it cleaves and resolves the cruciform DNA. This chain is Crossover junction endodeoxyribonuclease RuvC, found in Paraburkholderia phymatum (strain DSM 17167 / CIP 108236 / LMG 21445 / STM815) (Burkholderia phymatum).